The sequence spans 62 residues: Venom peptide 6 (62 aa).

The signal sequence occupies residues 1–26; sequence MKSTSVFILFAGIAIMACLQMTGTEA. AXPX repeat units lie at residues 26-29, 30-33, and 40-43; these read AAPS, ASPN, and ADPD. The propeptide occupies 27-46; the sequence is APSASPNPTPVARADPDPEA.

It belongs to the MCD family. In terms of tissue distribution, expressed by the venom gland.

It is found in the secreted. It localises to the target cell membrane. Its function is as follows. Antimicrobial peptide with strong activity against the fungus B.cinerea (MIC=5 uM) and the Gram-positive bacterium S.aureus (MIC=50 uM), and no activity against C.albicans (MIC&gt;200 uM), and the Gram-negative bacterium E.coli (MIC&gt;200 uM). Shows cytolytic activity against insect cell lines. Has no hemolytic activity against human erythrocytes. In vivo, peptide injection in the vicinity of the head and thorax of lepidopteran larvae induces feeding disorder that lasts one or two days before recovering. This Eumenes pomiformis (Potter wasp) protein is Venom peptide 6.